The chain runs to 317 residues: Acetyl-coenzyme A carboxylase carboxyl transferase subunit alpha (317 aa).

A CoA carboxyltransferase C-terminal domain is found at 33 to 294 (NINKEINCLR…KNRILKDLKE (262 aa)).

It belongs to the AccA family. As to quaternary structure, acetyl-CoA carboxylase is a heterohexamer composed of biotin carboxyl carrier protein (AccB), biotin carboxylase (AccC) and two subunits each of ACCase subunit alpha (AccA) and ACCase subunit beta (AccD).

The protein resides in the cytoplasm. The catalysed reaction is N(6)-carboxybiotinyl-L-lysyl-[protein] + acetyl-CoA = N(6)-biotinyl-L-lysyl-[protein] + malonyl-CoA. Its pathway is lipid metabolism; malonyl-CoA biosynthesis; malonyl-CoA from acetyl-CoA: step 1/1. Functionally, component of the acetyl coenzyme A carboxylase (ACC) complex. First, biotin carboxylase catalyzes the carboxylation of biotin on its carrier protein (BCCP) and then the CO(2) group is transferred by the carboxyltransferase to acetyl-CoA to form malonyl-CoA. This is Acetyl-coenzyme A carboxylase carboxyl transferase subunit alpha from Wigglesworthia glossinidia brevipalpis.